The following is a 301-amino-acid chain: Probable alpha-L-glutamate ligase (301 aa).

The region spanning 104-287 (LQLLSRKGVG…VAALVMEFIE (184 aa)) is the ATP-grasp domain. Residues lysine 141, 178-179 (EY), aspartate 187, and 211-213 (RSN) each bind ATP. Residues aspartate 248, glutamate 260, and asparagine 262 each coordinate Mg(2+). Mn(2+) is bound by residues aspartate 248, glutamate 260, and asparagine 262.

The protein belongs to the RimK family. It depends on Mg(2+) as a cofactor. Mn(2+) is required as a cofactor.

In Saccharophagus degradans (strain 2-40 / ATCC 43961 / DSM 17024), this protein is Probable alpha-L-glutamate ligase.